The chain runs to 1018 residues: Cell wall protein 1 (1018 aa).

The N-terminal stretch at 1 to 17 is a signal peptide; it reads MLPSIVISIVLASFVSA. Residues 32-143 form the CFEM 1 domain; sequence NPYTIYPSVA…SSLSAAATAV (112 aa). 4 cysteine pairs are disulfide-bonded: Cys60-Cys100, Cys64-Cys95, Cys74-Cys81, and Cys83-Cys116. Position 78 (Asp78) interacts with heme. The tract at residues 147 to 227 is disordered; it reads SEQPVETSSE…STPEDNPYTI (81 aa). The span at 148 to 164 shows a compositional bias: polar residues; sequence EQPVETSSEPAGSSQSV. Residues 165–221 show a composition bias toward low complexity; it reads ESSQPAETSSSEPAETSSSEPAETSSETSSEQPASSEPAETSSEESSTITSAPSTPE. 2 consecutive CFEM domains span residues 223–334 and 393–504; these read NPYT…ATAV and SSSS…ATAV. Disulfide bonds link Cys251/Cys291, Cys255/Cys286, Cys265/Cys272, and Cys274/Cys307. Asp269 serves as a coordination point for heme. A disordered region spans residues 338–396; it reads SEQSVETSSESAESSQSVESSQPAETSSEQPSETSSETSSQQLSSITSAPDSSATSSSS. Cystine bridges form between Cys421–Cys461, Cys425–Cys456, Cys435–Cys442, and Cys444–Cys477. Asp439 is a heme binding site. The interval 507-557 is disordered; that stretch reads SDSASETASQEPSETSSEQPSETASQQPAETSSEESSTITSAPSTPEDNPY. Residues 509–553 are compositionally biased toward low complexity; that stretch reads SASETASQEPSETSSEQPSETASQQPAETSSEESSTITSAPSTPE. Residues 555 to 666 form the CFEM 4 domain; it reads NPYTIYPSVA…SSLNAAATAV (112 aa). Cystine bridges form between Cys583/Cys623, Cys587/Cys618, Cys597/Cys604, and Cys606/Cys639. A heme-binding site is contributed by Asp601. The interval 677-785 is disordered; that stretch reads SASESASQVP…STSTKSDAAS (109 aa). Low complexity predominate over residues 690 to 766; it reads SAASSQSANN…AISESVAPSS (77 aa). 9 N-linked (GlcNAc...) asparagine glycosylation sites follow: Asn698, Asn708, Asn718, Asn729, Asn743, Asn753, Asn769, Asn798, and Asn965. Positions 767–785 are enriched in polar residues; it reads YGNSTIAQPSTSTKSDAAS. Residue Ser989 is the site of GPI-anchor amidated serine attachment. Residues 990-1018 constitute a propeptide, removed in mature form; it reads VAIANMANTKFASTMSLLVASFVFVGLFI.

Belongs to the RBT5 family. In terms of processing, the GPI-anchor is attached to the protein in the endoplasmic reticulum and serves to target the protein to the cell surface. There, the glucosamine-inositol phospholipid moiety is cleaved off and the GPI-modified mannoprotein is covalently attached via its lipidless GPI glycan remnant to the 1,6-beta-glucan of the outer cell wall layer.

It localises to the secreted. Its subcellular location is the cell wall. It is found in the membrane. Functionally, heme-binding protein involved in heme-iron utilization. The ability to acquire iron from host tissues is a major virulence factor of pathogenic microorganisms. Required for biofilm formation. In Candida albicans (strain SC5314 / ATCC MYA-2876) (Yeast), this protein is Cell wall protein 1 (CSA1).